We begin with the raw amino-acid sequence, 372 residues long: Embryonic growth/differentiation factor 1 (372 aa).

Positions 1 to 29 (MPPPQQGPCGHHLLLLLALLLPSLPLTRA) are cleaved as a signal peptide. The propeptide occupies 30–253 (PVPPGPAAAL…LCHPLARPRR (224 aa)). The interval 67–86 (RRRDPQETRSGSRRTSPGVT) is disordered. Asn-206 is a glycosylation site (N-linked (GlcNAc...) asparagine). 3 disulfides stabilise this stretch: Cys-267-Cys-337, Cys-296-Cys-369, and Cys-300-Cys-371.

It belongs to the TGF-beta family. Homodimer; disulfide-linked. In terms of tissue distribution, expressed in the brain.

The protein resides in the secreted. May mediate cell differentiation events during embryonic development. The chain is Embryonic growth/differentiation factor 1 (GDF1) from Homo sapiens (Human).